We begin with the raw amino-acid sequence, 602 residues long: Bifunctional xylanase/deacetylase (602 aa).

The first 14 residues, 1–14 (MSATLLVPSMTVKA), serve as a signal peptide directing secretion. The GH11 domain occupies 17–211 (TIYNNKTGNQ…SSGSASVYKN (195 aa)). E108 acts as the Nucleophile in catalysis. The active-site Proton donor is E198. Residues 216–240 (GGSSSSSGNQGGNQGGNTGNENAGN) form a disordered region. A compositionally biased stretch (gly residues) spans 224 to 233 (NQGGNQGGNT). Positions 249-366 (DKIQCETMTK…DAYLDYFNNS (118 aa)) constitute a CBM6 domain. The region spanning 402–578 (KLIALTFDDG…GLKNQGYTFV (177 aa)) is the NodB homology domain.

The protein belongs to the glycosyl hydrolase 11 (cellulase G) family. Post-translationally, in the later growth phases, seems to undergo a proteolytic cleavage into a 30 kDa protein possessing xylanolytic activity.

It is found in the secreted. The catalysed reaction is Endohydrolysis of (1-&gt;4)-beta-D-xylosidic linkages in xylans.. It functions in the pathway glycan degradation; xylan degradation. Endo-acting xylanase which specifically cleaves internal linkages on the xylan backbone, releasing xylooligosaccharides. Is also probably able, via its C-terminal domain, to remove acetyl groups from acetylated xylan, and thus it is probably capable of hydrolyzing acetylated xylan. The polypeptide is Bifunctional xylanase/deacetylase (xyn11A) (Pseudobutyrivibrio xylanivorans).